Consider the following 485-residue polypeptide: Putative ATP-dependent RNA helicase ste13 (485 aa).

The segment at aspartate 16–valine 38 is disordered. The Q motif signature appears at threonine 44–glutamate 72. The Helicase ATP-binding domain occupies isoleucine 75–isoleucine 245. Alanine 88–threonine 95 is a binding site for ATP. The DEAD box motif lies at aspartate 193–aspartate 196. A Helicase C-terminal domain is found at glycine 255 to leucine 415. Positions leucine 437–aspartate 485 are disordered.

It belongs to the DEAD box helicase family. DDX6/DHH1 subfamily.

Its subcellular location is the cytoplasm. The protein resides in the P-body. The enzyme catalyses ATP + H2O = ADP + phosphate + H(+). In terms of biological role, ATP-dependent RNA helicase involved in mRNA turnover, and more specifically in mRNA decapping. Is involved in G1/S DNA-damage checkpoint recovery, probably through the regulation of the translational status of a subset of mRNAs. May also have a role in translation and mRNA nuclear export. The protein is Putative ATP-dependent RNA helicase ste13 (ste13) of Schizosaccharomyces pombe (strain 972 / ATCC 24843) (Fission yeast).